A 169-amino-acid polypeptide reads, in one-letter code: ATP synthase subunit b (169 aa).

The helical transmembrane segment at 11 to 31 (IPSFIAQVVNFGLLLGLLYLF) threads the bilayer.

Belongs to the ATPase B chain family. F-type ATPases have 2 components, F(1) - the catalytic core - and F(0) - the membrane proton channel. F(1) has five subunits: alpha(3), beta(3), gamma(1), delta(1), epsilon(1). F(0) has three main subunits: a(1), b(2) and c(10-14). The alpha and beta chains form an alternating ring which encloses part of the gamma chain. F(1) is attached to F(0) by a central stalk formed by the gamma and epsilon chains, while a peripheral stalk is formed by the delta and b chains.

Its subcellular location is the cell membrane. In terms of biological role, f(1)F(0) ATP synthase produces ATP from ADP in the presence of a proton or sodium gradient. F-type ATPases consist of two structural domains, F(1) containing the extramembraneous catalytic core and F(0) containing the membrane proton channel, linked together by a central stalk and a peripheral stalk. During catalysis, ATP synthesis in the catalytic domain of F(1) is coupled via a rotary mechanism of the central stalk subunits to proton translocation. Its function is as follows. Component of the F(0) channel, it forms part of the peripheral stalk, linking F(1) to F(0). The polypeptide is ATP synthase subunit b (Dehalococcoides mccartyi (strain ATCC BAA-2266 / KCTC 15142 / 195) (Dehalococcoides ethenogenes (strain 195))).